The following is a 64-amino-acid chain: uncharacterized protein (64 aa).

A helical membrane pass occupies residues Val41–Ile61.

The protein resides in the membrane. This is an uncharacterized protein from Acheta domesticus (House cricket).